The following is a 441-amino-acid chain: GTPase Der (441 aa).

2 EngA-type G domains span residues 3-167 (PLIA…PNKT) and 176-351 (TRIA…EQFA). GTP is bound by residues 9–16 (GRPNVGKS), 56–60 (DTGGF), 119–122 (NKID), 182–189 (GRPNVGKS), 229–233 (DTAGI), and 294–297 (NKWD). Positions 352–436 (KRISTSDLNR…PMRLLFKGRE (85 aa)) constitute a KH-like domain.

It belongs to the TRAFAC class TrmE-Era-EngA-EngB-Septin-like GTPase superfamily. EngA (Der) GTPase family. As to quaternary structure, associates with the 50S ribosomal subunit.

GTPase that plays an essential role in the late steps of ribosome biogenesis. This is GTPase Der from Geotalea daltonii (strain DSM 22248 / JCM 15807 / FRC-32) (Geobacter daltonii).